We begin with the raw amino-acid sequence, 985 residues long: Protein psiQ (985 aa).

The N-terminal stretch at 1 to 20 (MMKYIYILLIFSLLFLKINS) is a signal peptide. In terms of domain architecture, PA14 spans 102-247 (QSTTNPNVYA…YDECGVCQGD (146 aa)). N-linked (GlcNAc...) asparagine glycosylation is found at Asn-127, Asn-309, Asn-424, Asn-491, Asn-517, Asn-527, Asn-592, Asn-620, Asn-649, Asn-696, Asn-735, Asn-767, Asn-786, Asn-824, and Asn-842.

Belongs to the prespore-cell-inducing factor family.

It is found in the secreted. The sequence is that of Protein psiQ (psiQ) from Dictyostelium discoideum (Social amoeba).